Here is a 243-residue protein sequence, read N- to C-terminus: Ribosomal RNA small subunit methyltransferase J (243 aa).

S-adenosyl-L-methionine is bound by residues 112–113 and Asp-164; that span reads ER.

Belongs to the methyltransferase superfamily. RsmJ family.

The protein resides in the cytoplasm. It catalyses the reaction guanosine(1516) in 16S rRNA + S-adenosyl-L-methionine = N(2)-methylguanosine(1516) in 16S rRNA + S-adenosyl-L-homocysteine + H(+). In terms of biological role, specifically methylates the guanosine in position 1516 of 16S rRNA. The sequence is that of Ribosomal RNA small subunit methyltransferase J from Legionella pneumophila (strain Paris).